The chain runs to 574 residues: Urease subunit alpha (574 aa).

Residues 131–574 (GAIDSHIHFI…LPMAQRYLLL (444 aa)) form the Urease domain. Residues His-136, His-138, and Lys-219 each coordinate Ni(2+). N6-carboxylysine is present on Lys-219. His-221 serves as a coordination point for substrate. Residues His-248 and His-274 each coordinate Ni(2+). The Proton donor role is filled by His-322. Asp-362 contributes to the Ni(2+) binding site. Positions 384–403 (KVQRGPLPEDAANPRGSRND) are disordered.

The protein belongs to the metallo-dependent hydrolases superfamily. Urease alpha subunit family. In terms of assembly, heterotrimer of UreA (gamma), UreB (beta) and UreC (alpha) subunits. Three heterotrimers associate to form the active enzyme. Ni cation serves as cofactor. Carboxylation allows a single lysine to coordinate two nickel ions.

The protein localises to the cytoplasm. It catalyses the reaction urea + 2 H2O + H(+) = hydrogencarbonate + 2 NH4(+). It functions in the pathway nitrogen metabolism; urea degradation; CO(2) and NH(3) from urea (urease route): step 1/1. The chain is Urease subunit alpha from Prochlorococcus marinus (strain MIT 9313).